A 190-amino-acid chain; its full sequence is CASP-like protein 2U2 (190 aa).

Over 1–10 the chain is Cytoplasmic; it reads MGEKMQGFQG. A helical transmembrane segment spans residues 11–31; that stretch reads WSIGIRFLTSCVSIASLILLL. Residues 32–59 are Extracellular-facing; sequence KSKQTVQVSVGLDYVTQQVKYSDTSAFV. Residues 60-80 form a helical membrane-spanning segment; sequence YLVFSDILVAVYCIVVLVGLI. The Cytoplasmic portion of the chain corresponds to 81-94; that stretch reads PAALGKSHPGKAGQ. The chain crosses the membrane as a helical span at residues 95–115; it reads WAIFIFDQVLAYVLLAAASSA. Over 116-144 the chain is Extracellular; the sequence is TEVAYLADKGMAKTSWEAVCPRFAHFCHT. The chain crosses the membrane as a helical span at residues 145-165; that stretch reads VMASISLSFVAVLLLALLAVV. Over 166–190 the chain is Cytoplasmic; the sequence is SASGLFGRFYRRPLFAVKMRHNTLI.

This sequence belongs to the Casparian strip membrane proteins (CASP) family. As to quaternary structure, homodimer and heterodimers.

The protein localises to the cell membrane. In Pteridium aquilinum subsp. aquilinum (Bracken fern), this protein is CASP-like protein 2U2.